Reading from the N-terminus, the 207-residue chain is dITP/XTP pyrophosphatase (207 aa).

Substrate is bound at residue 11–16 (TGNPGK). The active-site Proton acceptor is Asp72. Asp72 contributes to the Mg(2+) binding site. Substrate contacts are provided by residues Ser73, 154 to 157 (FGYD), Lys177, and 182 to 183 (HR).

This sequence belongs to the HAM1 NTPase family. In terms of assembly, homodimer. Requires Mg(2+) as cofactor.

It catalyses the reaction XTP + H2O = XMP + diphosphate + H(+). It carries out the reaction dITP + H2O = dIMP + diphosphate + H(+). The enzyme catalyses ITP + H2O = IMP + diphosphate + H(+). Functionally, pyrophosphatase that catalyzes the hydrolysis of nucleoside triphosphates to their monophosphate derivatives, with a high preference for the non-canonical purine nucleotides XTP (xanthosine triphosphate), dITP (deoxyinosine triphosphate) and ITP. Seems to function as a house-cleaning enzyme that removes non-canonical purine nucleotides from the nucleotide pool, thus preventing their incorporation into DNA/RNA and avoiding chromosomal lesions. The chain is dITP/XTP pyrophosphatase from Thermus thermophilus (strain ATCC BAA-163 / DSM 7039 / HB27).